Here is a 204-residue protein sequence, read N- to C-terminus: Urease accessory protein UreG (204 aa).

11–18 (GPVGAGKT) is a binding site for GTP.

Belongs to the SIMIBI class G3E GTPase family. UreG subfamily. In terms of assembly, homodimer. UreD, UreF and UreG form a complex that acts as a GTP-hydrolysis-dependent molecular chaperone, activating the urease apoprotein by helping to assemble the nickel containing metallocenter of UreC. The UreE protein probably delivers the nickel.

It localises to the cytoplasm. Facilitates the functional incorporation of the urease nickel metallocenter. This process requires GTP hydrolysis, probably effectuated by UreG. The protein is Urease accessory protein UreG of Staphylococcus epidermidis (strain ATCC 12228 / FDA PCI 1200).